The following is a 1139-amino-acid chain: Integrin alpha ina-1 (1139 aa).

Positions 1–19 (MRECIISWTLLLCLSCVKS) are cleaved as a signal peptide. The Extracellular portion of the chain corresponds to 20–1084 (FNLDVNAPIY…PTIGDSRPIP (1065 aa)). The FG-GAP 1 repeat unit spans residues 21-85 (NLDVNAPIYR…CDINTFYNGG (65 aa)). N-linked (GlcNAc...) asparagine glycans are attached at residues asparagine 108 and asparagine 136. FG-GAP repeat units lie at residues 111-171 (RGRT…LQST), 180-231 (LPTT…IFDS), 242-302 (NGDM…SSSK), 307-370 (EDKF…QRKQ), 378-438 (HPPK…IEKF), and 448-510 (GNDL…MEKR). N-linked (GlcNAc...) asparagine glycosylation is present at asparagine 313. N-linked (GlcNAc...) asparagine glycans are attached at residues asparagine 580, asparagine 788, asparagine 851, and asparagine 1026. Residues 1085 to 1106 (WWIYVIAAVIGVLILSLIIICL) traverse the membrane as a helical segment. The Cytoplasmic portion of the chain corresponds to 1107-1139 (SKCGFFKRNRLDQPSLYTAQLKHEREEWADTGL).

Belongs to the integrin alpha chain family. Heterodimer of an alpha and a beta subunit. Alpha ina-1 associates with beta pat-3. Interacts (via cytoplasmic domain) with src-1 (when phosphorylated at 'Tyr-416').

It localises to the membrane. Its subcellular location is the cell projection. The protein resides in the phagocytic cup. The protein localises to the cytoplasmic vesicle. It is found in the phagosome membrane. Functionally, plays a role in cell migration, axon fasciculation, and morphogenesis. During gonad morphogenesis, involved in distal tip cell (DTC)-mediated guidance of gonad elongation, in maintaining their sharp tapering morphology and in their migration. Involved in the anterior-posterior positioning of QR neuroblast descendants by regulating the migratory speed of QR.p. Probably by acting as a receptor for apoptotic cells, plays a role in the clearance of apoptotic cells during mid-embryogenesis. In Caenorhabditis elegans, this protein is Integrin alpha ina-1 (ina-1).